A 245-amino-acid chain; its full sequence is DnaJ homolog subfamily B member 6-B (245 aa).

The region spanning 3–69 (EYYDVLGVQR…KKRDIYDKYG (67 aa)) is the J domain.

Homooligomer.

It is found in the cytoplasm. The protein localises to the perinuclear region. Its subcellular location is the nucleus. Has a stimulatory effect on the ATPase activity of HSP70 in a dose-dependent and time-dependent manner and hence acts as a co-chaperone of HSP70. Plays an indispensable role in the organization of KRT8/KRT18 filaments. Acts as an endogenous molecular chaperone for neuronal proteins including huntingtin. Suppresses aggregation and toxicity of polyglutamine-containing, aggregation-prone proteins. Also reduces cellular toxicity and caspase-3 activity. This is DnaJ homolog subfamily B member 6-B (dnajb6-b) from Xenopus laevis (African clawed frog).